Reading from the N-terminus, the 137-residue chain is Putative pre-16S rRNA nuclease (137 aa).

The protein belongs to the YqgF nuclease family.

It is found in the cytoplasm. In terms of biological role, could be a nuclease involved in processing of the 5'-end of pre-16S rRNA. This chain is Putative pre-16S rRNA nuclease, found in Buchnera aphidicola subsp. Schizaphis graminum (strain Sg).